The sequence spans 232 residues: Small ribosomal subunit protein uS2 (232 aa).

It belongs to the universal ribosomal protein uS2 family.

This chain is Small ribosomal subunit protein uS2, found in Heliobacterium modesticaldum (strain ATCC 51547 / Ice1).